A 120-amino-acid chain; its full sequence is NAD(P)H-quinone oxidoreductase subunit 3, chloroplastic (120 aa).

A run of 3 helical transmembrane segments spans residues I9–G29, M64–M84, and V88–L108.

Belongs to the complex I subunit 3 family. NDH is composed of at least 16 different subunits, 5 of which are encoded in the nucleus.

It is found in the plastid. Its subcellular location is the chloroplast thylakoid membrane. It catalyses the reaction a plastoquinone + NADH + (n+1) H(+)(in) = a plastoquinol + NAD(+) + n H(+)(out). The catalysed reaction is a plastoquinone + NADPH + (n+1) H(+)(in) = a plastoquinol + NADP(+) + n H(+)(out). NDH shuttles electrons from NAD(P)H:plastoquinone, via FMN and iron-sulfur (Fe-S) centers, to quinones in the photosynthetic chain and possibly in a chloroplast respiratory chain. The immediate electron acceptor for the enzyme in this species is believed to be plastoquinone. Couples the redox reaction to proton translocation, and thus conserves the redox energy in a proton gradient. The sequence is that of NAD(P)H-quinone oxidoreductase subunit 3, chloroplastic from Agrostis stolonifera (Creeping bentgrass).